The primary structure comprises 181 residues: Nucleoside triphosphate/diphosphate phosphatase (181 aa).

Catalysis depends on arginine 26, which acts as the Proton donor. 6 residues coordinate Mg(2+): asparagine 90, aspartate 106, aspartate 108, aspartate 110, aspartate 123, and glutamate 126.

The protein belongs to the Ntdp family. It depends on Mg(2+) as a cofactor.

The catalysed reaction is a ribonucleoside 5'-triphosphate + H2O = a ribonucleoside 5'-diphosphate + phosphate + H(+). The enzyme catalyses a ribonucleoside 5'-diphosphate + H2O = a ribonucleoside 5'-phosphate + phosphate + H(+). Its function is as follows. Has nucleoside phosphatase activity towards nucleoside triphosphates and nucleoside diphosphates. This is Nucleoside triphosphate/diphosphate phosphatase from Staphylococcus carnosus (strain TM300).